Consider the following 198-residue polypeptide: Pyridoxine/pyridoxamine 5'-phosphate oxidase 2 (198 aa).

FMN is bound by residues Arg42, 59–60 (NT), Lys66, and 121–122 (RS).

The protein belongs to the pyridoxamine 5'-phosphate oxidase family. As to quaternary structure, homodimer. FMN serves as cofactor.

The catalysed reaction is pyridoxamine 5'-phosphate + O2 + H2O = pyridoxal 5'-phosphate + H2O2 + NH4(+). It carries out the reaction pyridoxine 5'-phosphate + O2 = pyridoxal 5'-phosphate + H2O2. Its pathway is cofactor metabolism; pyridoxal 5'-phosphate salvage; pyridoxal 5'-phosphate from pyridoxamine 5'-phosphate: step 1/1. It functions in the pathway cofactor metabolism; pyridoxal 5'-phosphate salvage; pyridoxal 5'-phosphate from pyridoxine 5'-phosphate: step 1/1. Functionally, catalyzes the oxidation of either pyridoxine 5'-phosphate (PNP) or pyridoxamine 5'-phosphate (PMP) into pyridoxal 5'-phosphate (PLP). Has an in vitro catalytic efficiency for PNP approximately 300-fold lower than that of PPOX1. The protein is Pyridoxine/pyridoxamine 5'-phosphate oxidase 2 (PPOX2) of Arabidopsis thaliana (Mouse-ear cress).